The chain runs to 707 residues: Mitochondrial disaggregase (707 aa).

A mitochondrion-targeting transit peptide spans methionine 1 to asparagine 36. Positions proline 92–cysteine 126 are autoinhibitory. ANK repeat units lie at residues asparagine 133–alanine 162, leucine 166–leucine 195, lysine 265–arginine 295, and methionine 298–arginine 327. Positions 346, 348, 383, 384, 385, 386, 387, 388, 455, and 496 each coordinate ATP. The interval leucine 507 to threonine 535 is regulatory; slows ATPase and disaggregase activities. ATP is bound at residue arginine 561. Lysine 589 carries the N6-acetyllysine modification. Residue arginine 620 coordinates ATP.

It belongs to the ClpA/ClpB family. In terms of assembly, homododecamer when substrate-bound; the homododecamer consists of 2 homohexamers stacked head-to-head via ANK repeat-mediated interactions. The active substrate-bound form is likely to exist in a dynamic equilibrium between homohexamers and homododecamers. Homotetradecamer in the unbound state which is remodeled upon substrate binding into the homododecamer. Interacts with PHB and PHB2. Interacts with MAVS; the interaction is enhanced by Sendai virus infection. In terms of processing, proteolytically cleaved by protease PARL. ATP-dependent protein disaggregase activity is stimulated by PARL-mediated cleavage of the N-terminal autoinhibitory peptide. Widely expressed (at protein level). Expressed in fetal, as well as in adult tissues, with highest levels in adult brain, including thalamus, hippocampus, occipital cortex and parietal cortex. Low expression in granulocytes.

It localises to the mitochondrion intermembrane space. It catalyses the reaction ATP + H2O = ADP + phosphate + H(+). Its activity is regulated as follows. Disaggregase activity is inhibited by ADP. Functionally, functions as a regulatory ATPase and participates in secretion/protein trafficking process. Has ATP-dependent protein disaggregase activity and is required to maintain the solubility of key mitochondrial proteins. Involved in mitochondrial-mediated antiviral innate immunity, activates RIG-I-mediated signal transduction and production of IFNB1 and pro-inflammatory cytokine IL6. Plays a role in granulocyte differentiation. The chain is Mitochondrial disaggregase from Homo sapiens (Human).